We begin with the raw amino-acid sequence, 285 residues long: Bifunctional protein FolD (285 aa).

NADP(+)-binding positions include 165 to 167 (GAS) and serine 190.

This sequence belongs to the tetrahydrofolate dehydrogenase/cyclohydrolase family. In terms of assembly, homodimer.

It catalyses the reaction (6R)-5,10-methylene-5,6,7,8-tetrahydrofolate + NADP(+) = (6R)-5,10-methenyltetrahydrofolate + NADPH. The catalysed reaction is (6R)-5,10-methenyltetrahydrofolate + H2O = (6R)-10-formyltetrahydrofolate + H(+). Its pathway is one-carbon metabolism; tetrahydrofolate interconversion. Catalyzes the oxidation of 5,10-methylenetetrahydrofolate to 5,10-methenyltetrahydrofolate and then the hydrolysis of 5,10-methenyltetrahydrofolate to 10-formyltetrahydrofolate. The protein is Bifunctional protein FolD of Cupriavidus metallidurans (strain ATCC 43123 / DSM 2839 / NBRC 102507 / CH34) (Ralstonia metallidurans).